Consider the following 631-residue polypeptide: Transforming acidic coiled-coil-containing protein 3 (631 aa).

Residue Ser-2 is modified to N-acetylserine. Position 39 is a phosphoserine (Ser-39). The span at 42–59 (ENVPPQSQAKATNVTFQT) shows a compositional bias: polar residues. A disordered region spans residues 42-70 (ENVPPQSQAKATNVTFQTPPRDPQTHRIL). Residue Ser-71 is modified to Phosphoserine. 2 necessary but not sufficient for spindle localization regions span residues 311-366 (EESF…PMPV) and 384-631 (KPTE…MEKI). Ser-347 is modified (phosphoserine; by AURKA). Residues 363-385 (PMPVAPITNSTQDTEEESGSGKP) form a disordered region. Residues 431–630 (QKDLDAVVNV…CDDLISKMEK (200 aa)) are a coiled coil.

It belongs to the TACC family. Interacts with GCN5L2 and PCAF. The coiled coil C-terminal region interacts with AH receptor nuclear translocator protein (ARNT) and ARNT2. Interacts with CCDC100/CEP120. Interacts with CKAP5 independently of clathrin. Interacts with CKAP5 and clathrin forming the TACC3/ch-TOG/clathrin complex located at spindle inter-microtubules bridges; TACC3 (phosphorylated at Ser-347 by AURKA) and CLTC are proposed to form a composite microtubule interaction surface. Embryonically expressed.

The protein localises to the cytoplasm. It localises to the cytoskeleton. It is found in the microtubule organizing center. Its subcellular location is the centrosome. The protein resides in the spindle pole. Its function is as follows. Plays a role in the microtubule-dependent coupling of the nucleus and the centrosome. Involved in the processes that regulate centrosome-mediated interkinetic nuclear migration (INM) of neural progenitors. Acts as a component of the TACC3/ch-TOG/clathrin complex proposed to contribute to stabilization of kinetochore fibers of the mitotic spindle by acting as inter-microtubule bridge. The TACC3/ch-TOG/clathrin complex is required for the maintenance of kinetochore fiber tension. May be involved in the control of cell growth and differentiation. May have a role in embryonic development. The sequence is that of Transforming acidic coiled-coil-containing protein 3 (Tacc3) from Mus musculus (Mouse).